The following is a 31-amino-acid chain: MLTLLSYFGFLFAILTLTSVLFIGLNKIQLI.

Residues 4-24 (LLSYFGFLFAILTLTSVLFIG) traverse the membrane as a helical segment.

It belongs to the PetL family. As to quaternary structure, the 4 large subunits of the cytochrome b6-f complex are cytochrome b6, subunit IV (17 kDa polypeptide, PetD), cytochrome f and the Rieske protein, while the 4 small subunits are PetG, PetL, PetM and PetN. The complex functions as a dimer.

Its subcellular location is the plastid. The protein localises to the chloroplast thylakoid membrane. In terms of biological role, component of the cytochrome b6-f complex, which mediates electron transfer between photosystem II (PSII) and photosystem I (PSI), cyclic electron flow around PSI, and state transitions. PetL is important for photoautotrophic growth as well as for electron transfer efficiency and stability of the cytochrome b6-f complex. This Angiopteris evecta (Mule's foot fern) protein is Cytochrome b6-f complex subunit 6.